Consider the following 62-residue polypeptide: Alpha-conotoxin Vt1.27 (62 aa).

The N-terminal stretch at Met-1–Ser-21 is a signal peptide. The propeptide occupies Phe-22 to Arg-40. Disulfide bonds link Cys-46–Cys-52 and Cys-47–Cys-61.

It belongs to the conotoxin A superfamily. In terms of tissue distribution, expressed by the venom duct.

It is found in the secreted. Functionally, the short (45-61) amidated synthetic peptide inhibits the rat neuronal alpha-3-beta-2/CHRNA3-CHRNB2 nicotinic acetylcholine receptor (nAChR) (IC(50)=1.16 uM). It also inhibits Cav2.2/CACNA1C voltage-gated calcium channel (IC(50)=398 nM). In vivo, when tested in rat pain models, this short amidated peptide increases the pain threshold. The polypeptide is Alpha-conotoxin Vt1.27 (Conus planorbis (Planorbis cone)).